Consider the following 934-residue polypeptide: 2-oxoglutarate dehydrogenase E1 component (934 aa).

Basic and acidic residues predominate over residues 515 to 537; the sequence is RAAQDKIDKSDKMDNPDMERPES. The segment at 515-544 is disordered; the sequence is RAAQDKIDKSDKMDNPDMERPESLQEPLQS.

This sequence belongs to the alpha-ketoglutarate dehydrogenase family. As to quaternary structure, homodimer. Part of the 2-oxoglutarate dehydrogenase (OGDH) complex composed of E1 (2-oxoglutarate dehydrogenase), E2 (dihydrolipoamide succinyltransferase) and E3 (dihydrolipoamide dehydrogenase); the complex contains multiple copies of the three enzymatic components (E1, E2 and E3). Thiamine diphosphate is required as a cofactor.

The catalysed reaction is N(6)-[(R)-lipoyl]-L-lysyl-[protein] + 2-oxoglutarate + H(+) = N(6)-[(R)-S(8)-succinyldihydrolipoyl]-L-lysyl-[protein] + CO2. E1 component of the 2-oxoglutarate dehydrogenase (OGDH) complex which catalyzes the decarboxylation of 2-oxoglutarate, the first step in the conversion of 2-oxoglutarate to succinyl-CoA and CO(2). The sequence is that of 2-oxoglutarate dehydrogenase E1 component from Staphylococcus haemolyticus (strain JCSC1435).